Reading from the N-terminus, the 570-residue chain is Proline--tRNA ligase (570 aa).

The protein belongs to the class-II aminoacyl-tRNA synthetase family. ProS type 1 subfamily. In terms of assembly, homodimer.

The protein resides in the cytoplasm. The enzyme catalyses tRNA(Pro) + L-proline + ATP = L-prolyl-tRNA(Pro) + AMP + diphosphate. Functionally, catalyzes the attachment of proline to tRNA(Pro) in a two-step reaction: proline is first activated by ATP to form Pro-AMP and then transferred to the acceptor end of tRNA(Pro). As ProRS can inadvertently accommodate and process non-cognate amino acids such as alanine and cysteine, to avoid such errors it has two additional distinct editing activities against alanine. One activity is designated as 'pretransfer' editing and involves the tRNA(Pro)-independent hydrolysis of activated Ala-AMP. The other activity is designated 'posttransfer' editing and involves deacylation of mischarged Ala-tRNA(Pro). The misacylated Cys-tRNA(Pro) is not edited by ProRS. This chain is Proline--tRNA ligase, found in Shewanella sp. (strain MR-4).